The chain runs to 317 residues: Protoheme IX farnesyltransferase (317 aa).

Helical transmembrane passes span 36-56 (VMVL…ATVN), 57-77 (PVIA…SGCL), 108-128 (LAFG…ASNW), 129-149 (LAAG…SMWL), 157-177 (IVIG…AVTG), 184-204 (LVLF…LALV), 230-247 (IIWY…PVWL), 251-273 (GWLY…VQVY), and 284-304 (AAMG…SALL).

It belongs to the UbiA prenyltransferase family. Protoheme IX farnesyltransferase subfamily.

The protein localises to the cell inner membrane. It catalyses the reaction heme b + (2E,6E)-farnesyl diphosphate + H2O = Fe(II)-heme o + diphosphate. The protein operates within porphyrin-containing compound metabolism; heme O biosynthesis; heme O from protoheme: step 1/1. Functionally, converts heme B (protoheme IX) to heme O by substitution of the vinyl group on carbon 2 of heme B porphyrin ring with a hydroxyethyl farnesyl side group. This is Protoheme IX farnesyltransferase from Methylorubrum extorquens (strain CM4 / NCIMB 13688) (Methylobacterium extorquens).